A 95-amino-acid polypeptide reads, in one-letter code: Large ribosomal subunit protein uL23 (95 aa).

It belongs to the universal ribosomal protein uL23 family. Part of the 50S ribosomal subunit. Contacts protein L29, and trigger factor when it is bound to the ribosome.

Its function is as follows. One of the early assembly proteins it binds 23S rRNA. One of the proteins that surrounds the polypeptide exit tunnel on the outside of the ribosome. Forms the main docking site for trigger factor binding to the ribosome. This is Large ribosomal subunit protein uL23 from Pediococcus pentosaceus (strain ATCC 25745 / CCUG 21536 / LMG 10740 / 183-1w).